Reading from the N-terminus, the 301-residue chain is Immune-associated nucleotide-binding protein 5 (301 aa).

Residues 11-214 (EPVRNIVLVG…FTEENDLNEK (204 aa)) enclose the AIG1-type G domain. Positions 20–27 (GPTGNGKS) are G1. 20 to 28 (GPTGNGKSS) lines the GTP pocket. A G2 region spans residues 46–50 (CKTCK). The G3 stretch occupies residues 63-66 (DTPG). The segment at 133–136 (TGGD) is G4. The interval 172–174 (NNK) is G5. Residue Asn173 participates in GTP binding.

The protein belongs to the TRAFAC class TrmE-Era-EngA-EngB-Septin-like GTPase superfamily. AIG1/Toc34/Toc159-like paraseptin GTPase family. IAN subfamily. As to expression, expressed in pollen, cotyledons and lateral roots.

The protein is Immune-associated nucleotide-binding protein 5 of Arabidopsis thaliana (Mouse-ear cress).